A 502-amino-acid polypeptide reads, in one-letter code: ATP synthase subunit alpha, chloroplastic (502 aa).

An ATP-binding site is contributed by 170–177 (GDRQTGKT).

It belongs to the ATPase alpha/beta chains family. F-type ATPases have 2 components, CF(1) - the catalytic core - and CF(0) - the membrane proton channel. CF(1) has five subunits: alpha(3), beta(3), gamma(1), delta(1), epsilon(1). CF(0) has four main subunits: a, b, b' and c.

The protein localises to the plastid. It is found in the chloroplast thylakoid membrane. The enzyme catalyses ATP + H2O + 4 H(+)(in) = ADP + phosphate + 5 H(+)(out). In terms of biological role, produces ATP from ADP in the presence of a proton gradient across the membrane. The alpha chain is a regulatory subunit. The protein is ATP synthase subunit alpha, chloroplastic of Rhodomonas salina (Cryptomonas salina).